Reading from the N-terminus, the 96-residue chain is Large ribosomal subunit protein bL21 (96 aa).

Belongs to the bacterial ribosomal protein bL21 family. In terms of assembly, part of the 50S ribosomal subunit. Contacts protein L20.

Its function is as follows. This protein binds to 23S rRNA in the presence of protein L20. In Chlorobium chlorochromatii (strain CaD3), this protein is Large ribosomal subunit protein bL21.